A 90-amino-acid polypeptide reads, in one-letter code: UPF0335 protein Smed_2680 (90 aa).

This sequence belongs to the UPF0335 family.

This is UPF0335 protein Smed_2680 from Sinorhizobium medicae (strain WSM419) (Ensifer medicae).